A 354-amino-acid polypeptide reads, in one-letter code: uncharacterized protein (354 aa).

Residues 48–285 (VETWEISKIY…DEGYEVVLKG (238 aa)) form the ABC transporter domain. Residue 87-94 (GPNGAGKT) coordinates ATP.

This sequence belongs to the ABC transporter superfamily.

This is an uncharacterized protein from Synechocystis sp. (strain ATCC 27184 / PCC 6803 / Kazusa).